Reading from the N-terminus, the 205-residue chain is Rho-related protein racI (205 aa).

GTP is bound at residue Gly-12–Thr-19. The Effector region signature appears at Tyr-34 to Thr-42. GTP is bound by residues Asp-59–Leu-63 and Thr-119–Asp-122. Cys-202 is modified (cysteine methyl ester). The S-geranylgeranyl cysteine moiety is linked to residue Cys-202. Positions Ile-203 to Gln-205 are cleaved as a propeptide — removed in mature form.

Belongs to the small GTPase superfamily. Rho family.

It localises to the cell membrane. The protein is Rho-related protein racI (racI) of Dictyostelium discoideum (Social amoeba).